The following is a 388-amino-acid chain: Succinyl-diaminopimelate desuccinylase (388 aa).

H72 lines the Zn(2+) pocket. D74 is an active-site residue. Zn(2+) is bound at residue D105. The Proton acceptor role is filled by E139. Zn(2+) contacts are provided by E140, E168, and H353.

This sequence belongs to the peptidase M20A family. DapE subfamily. In terms of assembly, homodimer. It depends on Zn(2+) as a cofactor. The cofactor is Co(2+).

It catalyses the reaction N-succinyl-(2S,6S)-2,6-diaminopimelate + H2O = (2S,6S)-2,6-diaminopimelate + succinate. The protein operates within amino-acid biosynthesis; L-lysine biosynthesis via DAP pathway; LL-2,6-diaminopimelate from (S)-tetrahydrodipicolinate (succinylase route): step 3/3. In terms of biological role, catalyzes the hydrolysis of N-succinyl-L,L-diaminopimelic acid (SDAP), forming succinate and LL-2,6-diaminopimelate (DAP), an intermediate involved in the bacterial biosynthesis of lysine and meso-diaminopimelic acid, an essential component of bacterial cell walls. The chain is Succinyl-diaminopimelate desuccinylase from Orientia tsutsugamushi (strain Boryong) (Rickettsia tsutsugamushi).